Here is a 211-residue protein sequence, read N- to C-terminus: Peptidyl-prolyl cis-trans isomerase FKBP14 (211 aa).

A signal peptide spans 1-19 (MRFFLWNAILALWVTVLSG). Residues cysteine 38 and cysteine 96 are joined by a disulfide bond. The PPIase FKBP-type domain occupies 45–135 (GDLMLVHYEG…IFNIDLLEIR (91 aa)). Residues 135–170 (RNGPRSHESFQEMDLNDDWRLSKHEVKVYLQKEFEK) form the EF-hand 1 domain. Ca(2+) is bound by residues aspartate 148, asparagine 150, aspartate 152, arginine 154, and glutamate 159. The N-linked (GlcNAc...) asparagine glycan is linked to asparagine 176. The region spanning 179-211 (HHDALVEDIFDKEDEDKDGFISAREFTYVHDEL) is the EF-hand 2 domain. Positions 192, 194, 196, and 203 each coordinate Ca(2+). The Prevents secretion from ER motif lies at 208-211 (HDEL).

As to quaternary structure, monomer. Homodimer. Interacts with type III, type IV and type X collagens.

The protein localises to the endoplasmic reticulum lumen. It carries out the reaction [protein]-peptidylproline (omega=180) = [protein]-peptidylproline (omega=0). With respect to regulation, inhibited by tacrolimus/FK506. In terms of biological role, PPIase which accelerates the folding of proteins during protein synthesis. Has a preference for substrates containing 4-hydroxylproline modifications, including type III collagen. May also target type VI and type X collagens. The protein is Peptidyl-prolyl cis-trans isomerase FKBP14 (Fkbp14) of Mus musculus (Mouse).